Reading from the N-terminus, the 155-residue chain is Small ribosomal subunit protein uS7c (155 aa).

The protein belongs to the universal ribosomal protein uS7 family. In terms of assembly, part of the 30S ribosomal subunit.

Its subcellular location is the plastid. The protein resides in the chloroplast. Functionally, one of the primary rRNA binding proteins, it binds directly to 16S rRNA where it nucleates assembly of the head domain of the 30S subunit. The sequence is that of Small ribosomal subunit protein uS7c (rps7) from Ginkgo biloba (Ginkgo).